A 32-amino-acid chain; its full sequence is Cytochrome b6-f complex subunit 7 (32 aa).

Residues 9-27 (AALFWVLIPLGLAGGALLL) traverse the membrane as a helical segment.

Belongs to the PetM family. The 4 large subunits of the cytochrome b6-f complex are cytochrome b6, subunit IV (17 kDa polypeptide, PetD), cytochrome f and the Rieske protein, while the 4 small subunits are PetG, PetL, PetM and PetN. The complex functions as a dimer.

It is found in the cellular thylakoid membrane. Component of the cytochrome b6-f complex, which mediates electron transfer between photosystem II (PSII) and photosystem I (PSI), cyclic electron flow around PSI, and state transitions. The polypeptide is Cytochrome b6-f complex subunit 7 (Synechococcus sp. (strain RCC307)).